Consider the following 1031-residue polypeptide: Protein translocase subunit SecA (1031 aa).

ATP contacts are provided by residues Gln-143, 161–165 (GEGKT), and Asp-662. Residues Cys-1015, Cys-1017, Cys-1026, and Cys-1027 each coordinate Zn(2+).

The protein belongs to the SecA family. As to quaternary structure, monomer and homodimer. Part of the essential Sec protein translocation apparatus which comprises SecA, SecYEG and auxiliary proteins SecDF. Other proteins may also be involved. The cofactor is Zn(2+).

Its subcellular location is the cell inner membrane. It is found in the cytoplasm. The enzyme catalyses ATP + H2O + cellular proteinSide 1 = ADP + phosphate + cellular proteinSide 2.. Functionally, part of the Sec protein translocase complex. Interacts with the SecYEG preprotein conducting channel. Has a central role in coupling the hydrolysis of ATP to the transfer of proteins into and across the cell membrane, serving as an ATP-driven molecular motor driving the stepwise translocation of polypeptide chains across the membrane. The chain is Protein translocase subunit SecA from Chlorobaculum tepidum (strain ATCC 49652 / DSM 12025 / NBRC 103806 / TLS) (Chlorobium tepidum).